The sequence spans 213 residues: Motile sperm domain-containing protein 1 (213 aa).

The MSP domain maps to proline 16–phenylalanine 143. Helical transmembrane passes span serine 159–glycine 179 and leucine 191–leucine 211. Positions leucine 205 to methionine 208 match the Nuclear export signal motif.

The protein resides in the endoplasmic reticulum membrane. It is found in the golgi apparatus membrane. In terms of biological role, plays a role in differentiation and/or proliferation of mesenchymal stem cells. Proposed to be involved in epithelial-to-mesenchymal transition (EMT). However, another study suggests that it is not required for EMT or stem cell self-renewal and acts during later stages of differentiation. This Rattus norvegicus (Rat) protein is Motile sperm domain-containing protein 1 (Mospd1).